A 252-amino-acid polypeptide reads, in one-letter code: Acyltransferase PGAP2 (252 aa).

Over 1–22 (MVPVGPERGANSLFSLRFTTFA) the chain is Cytoplasmic. Residues 23–43 (VGTVSLPLFAFLFCIVWSLLF) form a helical membrane-spanning segment. The Lumenal segment spans residues 44–77 (NFSETTATHCHVPNYLPSVSAAIGGETPQRYIWR). The chain crosses the membrane as a helical span at residues 78 to 98 (LCIGLHSAPRFLVGVAYLHYY). Over 99 to 111 (QGTPCSSPAYPRL) the chain is Cytoplasmic. A helical membrane pass occupies residues 112-132 (CHLNFLLNCCEIFFLILLTYV). Topologically, residues 133–142 (SSSENYEVHK) are lumenal. Residues 143 to 163 (LGFMAFMLFSVGYMFVTCSLW) traverse the membrane as a helical segment. The Cytoplasmic portion of the chain corresponds to 164-184 (RVARKGSGSLEERTSYAWKKR). Residues 185-205 (LFGFYLLMFLSSILVYIWHNM) traverse the membrane as a helical segment. The Lumenal segment spans residues 206–208 (YCE). Residues 209–229 (AGVYTVFALLEYLVVLSNMGF) traverse the membrane as a helical segment. The Cytoplasmic segment spans residues 230-252 (HMTAWWDFGNKELMICSPGDKRI).

The protein belongs to the PGAP2 family.

Its subcellular location is the golgi apparatus membrane. Its function is as follows. Involved in the fatty acid remodeling steps of GPI-anchor maturation where the unsaturated acyl chain at sn-2 of inositol phosphate is replaced by a saturated stearoyl chain. May catalyze the second step of the fatty acid remodeling, by reacylating a lyso-GPI intermediate at sn-2 of inositol phosphate by a saturated chain. The fatty acid remodeling steps is critical for the integration of GPI-APs into lipid rafts. The sequence is that of Acyltransferase PGAP2 from Xenopus tropicalis (Western clawed frog).